The sequence spans 161 residues: 18.1 kDa class I heat shock protein (161 aa).

The sHSP domain maps to 45 to 160 (DVAAFTNARV…QVKSIDISGA (116 aa)).

This sequence belongs to the small heat shock protein (HSP20) family. May form oligomeric structures. Binds to AKR2A.

Its subcellular location is the cytoplasm. The chain is 18.1 kDa class I heat shock protein (HSP18.1) from Arabidopsis thaliana (Mouse-ear cress).